Here is a 217-residue protein sequence, read N- to C-terminus: Uracil-DNA glycosylase (217 aa).

Asp62 functions as the Proton acceptor in the catalytic mechanism.

The protein belongs to the uracil-DNA glycosylase (UDG) superfamily. UNG family.

Its subcellular location is the cytoplasm. It carries out the reaction Hydrolyzes single-stranded DNA or mismatched double-stranded DNA and polynucleotides, releasing free uracil.. In terms of biological role, excises uracil residues from the DNA which can arise as a result of misincorporation of dUMP residues by DNA polymerase or due to deamination of cytosine. This chain is Uracil-DNA glycosylase, found in Streptococcus equi subsp. equi (strain 4047).